Reading from the N-terminus, the 227-residue chain is MSLSNSLGLLGRKVGMMRLFTDDGDTVPVTVVDVSNNRVTQVKTEANDGYDALQVAFGARKASRVTKPAAGHLAKAGVEAGEILKEFRVTADVAGKYAAGTVVPAADVFAVGQLVDVQGTSIGKGYAGTIKRHNMSSQRASHGNSRSHNVPGSIGMAQDPGRVFPGKRMTGHLGDVTVTTQNLNIVRIDEARQLLMIRGAVPGSKGGFVTVRAAIKAKPTTAAKGAN.

Glutamine 158 carries the N5-methylglutamine modification.

Belongs to the universal ribosomal protein uL3 family. As to quaternary structure, part of the 50S ribosomal subunit. Forms a cluster with proteins L14 and L19. In terms of processing, methylated by PrmB.

Functionally, one of the primary rRNA binding proteins, it binds directly near the 3'-end of the 23S rRNA, where it nucleates assembly of the 50S subunit. The chain is Large ribosomal subunit protein uL3 from Polaromonas sp. (strain JS666 / ATCC BAA-500).